The primary structure comprises 176 residues: Scytalone dehydratase-like protein AacuK (176 aa).

Residues Y26 and Y46 each contribute to the substrate site. Catalysis depends on residues H81 and H107.

It belongs to the scytalone dehydratase family.

It participates in secondary metabolite biosynthesis. Scytalone dehydratase-like protein; part of the gene cluster that mediates the biosynthesis of the tetrahydroxanthone dimer secalonic acid D. The pathway begins with the synthesis of atrochrysone thioester by the polyketide synthase AacuL. The atrochrysone carboxyl ACP thioesterase AacuM then breaks the thioester bond and releases the atrochrysone carboxylic acid from AacuL. Atrochrysone carboxylic acid is decarboxylated by the decarboxylase AacuI, and oxidized by the anthrone oxygenase AacuG to yield emodin. Emodin is then reduced to emodin hydroquinone by a yet unidentified oxidoreductase. A-ring reduction by the short chain dehydrogenase AacuN, dehydration by the scytalone dehydratase-like protein AacuK and probable spontaneous re-oxidation, results in overall deoxygenation to chrysophanol. Baeyer-Villiger oxidation by the Baeyer-Villiger monooxygenase (BVMO) AacuH then yields monodictyphenone. Monodictyphenone is transformed into compounds with the tetrahydroxanthone skeleton via methylesterification by the methyltransferase AacuQ, followed by the action of the flavin-dependent monooxygenase AacuC, the isomerase AacuP, and the short chain dehydrogenase/reductase AacuF or AacuD. AacuF and AacuD should accept the same compound as a substrate but perform the ketoreduction with a different stereoselectivity, thus yielding blennolides B and A, respectively. In the final step of the biosynthesis, the cytochrome P450 monooxygenase AacuE accepts blennolide B and/or blennolide A to conduct the dimerization reaction to furnish the tetrahydroxanthone dimers, secalonic acids D, B, and F. The chain is Scytalone dehydratase-like protein AacuK from Aspergillus aculeatus (strain ATCC 16872 / CBS 172.66 / WB 5094).